The chain runs to 441 residues: Proline--tRNA ligase (441 aa).

The protein belongs to the class-II aminoacyl-tRNA synthetase family. ProS type 2 subfamily. In terms of assembly, homodimer.

The protein localises to the cytoplasm. It carries out the reaction tRNA(Pro) + L-proline + ATP = L-prolyl-tRNA(Pro) + AMP + diphosphate. In terms of biological role, catalyzes the attachment of proline to tRNA(Pro) in a two-step reaction: proline is first activated by ATP to form Pro-AMP and then transferred to the acceptor end of tRNA(Pro). The protein is Proline--tRNA ligase of Methylorubrum populi (strain ATCC BAA-705 / NCIMB 13946 / BJ001) (Methylobacterium populi).